The sequence spans 138 residues: Phospholipase A2 homolog 1 (138 aa).

The first 16 residues, M1–G16, serve as a signal peptide directing secretion. Disulfide bonds link C42-C132, C44-C60, C59-C111, C65-C138, C66-C104, C73-C97, and C91-C102. The interval K121–K134 is important for membrane-damaging activities in eukaryotes and bacteria; heparin-binding.

Belongs to the phospholipase A2 family. Group II subfamily. K49 sub-subfamily. In terms of assembly, homodimer; non-covalently linked (probable alternative/compact dimer conformation in solution). Expressed by the venom gland.

The protein resides in the secreted. Functionally, snake venom phospholipase A2 homolog that lacks enzymatic and anticoagulant activities. In mice, it induces conspicuous local myonecrosis, edema, and a systemic interleukin-6 response. In vitro, it is cytolytic upon myoblasts, and weakly bactericidal. A model of myotoxic mechanism has been proposed: an apo Lys49-PLA2 is activated by the entrance of a hydrophobic molecule (e.g. fatty acid) at the hydrophobic channel of the protein leading to a reorientation of a monomer. This reorientation causes a transition between 'inactive' to 'active' states, causing alignment of C-terminal and membrane-docking sites (MDoS) side-by-side and putting the membrane-disruption sites (MDiS) in the same plane, exposed to solvent and in a symmetric position for both monomers. The MDoS region stabilizes the toxin on membrane by the interaction of charged residues with phospholipid head groups. Subsequently, the MDiS region destabilizes the membrane with penetration of hydrophobic residues. This insertion causes a disorganization of the membrane, allowing an uncontrolled influx of ions (i.e. calcium and sodium), and eventually triggering irreversible intracellular alterations and cell death. This Bothrops atrox (Barba amarilla) protein is Phospholipase A2 homolog 1.